We begin with the raw amino-acid sequence, 456 residues long: MGLSPSNISKLFEPFGFEQAKAVIAAVSGGSDSLGLLFLVRDYMAMLQNPPRLIAVTVDHQLRAESKAEAENVGLLCRQYGIEHRILVWDEAKPTSGLAAAARTARYRLLVQAARDVGGAFIVTGHTQDDQIETFLMRKERSAHAEARGLAAMSLRSLLDGLGLEGSVELDRPLLSVSRQTLRDELRGRGINWVDDPSNANTEYERPRIRHGIAAEADRQTVLDQIAEAGAARERDNAALIAALGNPASLRADANGALLVDPQLYAALPGNARRLFSGLLAAIAGGRRFLPGDSERSRIERVLSGDDDTHRLTVFGALIERGDSGSPHRFLREKRNLPKLHLEPGKPIVWDGRFRFLNEGMMDFELAAPGRQELADFLKSQNIEIESRKREALLVSPALYREGRLFALLFLQDGEFQQDIHIERHFAIFDHVLPGHDFDLARAVEARIGRICAEMS.

28–33 (SGGSDS) lines the ATP pocket.

The protein belongs to the tRNA(Ile)-lysidine synthase family.

Its subcellular location is the cytoplasm. It carries out the reaction cytidine(34) in tRNA(Ile2) + L-lysine + ATP = lysidine(34) in tRNA(Ile2) + AMP + diphosphate + H(+). In terms of biological role, ligates lysine onto the cytidine present at position 34 of the AUA codon-specific tRNA(Ile) that contains the anticodon CAU, in an ATP-dependent manner. Cytidine is converted to lysidine, thus changing the amino acid specificity of the tRNA from methionine to isoleucine. The chain is tRNA(Ile)-lysidine synthase from Brucella anthropi (strain ATCC 49188 / DSM 6882 / CCUG 24695 / JCM 21032 / LMG 3331 / NBRC 15819 / NCTC 12168 / Alc 37) (Ochrobactrum anthropi).